Reading from the N-terminus, the 233-residue chain is Ribose-5-phosphate isomerase A (233 aa).

Substrate is bound by residues 28–31 (SGST), 83–86 (DGAD), and 96–99 (KGGG). Glu-105 functions as the Proton acceptor in the catalytic mechanism. Substrate is bound at residue Lys-123.

This sequence belongs to the ribose 5-phosphate isomerase family. In terms of assembly, homodimer.

It carries out the reaction aldehydo-D-ribose 5-phosphate = D-ribulose 5-phosphate. The protein operates within carbohydrate degradation; pentose phosphate pathway; D-ribose 5-phosphate from D-ribulose 5-phosphate (non-oxidative stage): step 1/1. Its function is as follows. Catalyzes the reversible conversion of ribose-5-phosphate to ribulose 5-phosphate. The chain is Ribose-5-phosphate isomerase A from Bartonella bacilliformis (strain ATCC 35685 / KC583 / Herrer 020/F12,63).